A 468-amino-acid polypeptide reads, in one-letter code: Acetyl-CoA decarbonylase/synthase complex subunit gamma 2 (468 aa).

In terms of domain architecture, 4Fe-4S spans 1–60 (MKINSPLEAYKYLPQTNCGECGEATCMAFASKLIDRSGKPTQCPPLVKEKKFAKKLAELE). The [4Fe-4S] cluster site is built by Cys-18, Cys-21, Cys-26, and Cys-43.

In terms of assembly, heterodimer of delta and gamma chains. The ACDS complex is made up of alpha, epsilon, beta, gamma and delta chains with a probable stoichiometry of (alpha(2)epsilon(2))(4)-beta(8)-(gamma(1)delta(1))(8). The cofactor is corrinoid. It depends on [4Fe-4S] cluster as a cofactor.

The catalysed reaction is 5,6,7,8-tetrahydrosarcinapterin + methyl-Co(III)-[corrinoid Fe-S protein] = 5-methyltetrahydrosarcinapterin + Co(I)-[corrinoid Fe-S protein] + H(+). It functions in the pathway one-carbon metabolism; methanogenesis from acetate. Functionally, part of a complex that catalyzes the reversible cleavage of acetyl-CoA, allowing growth on acetate as sole source of carbon and energy. This is Acetyl-CoA decarbonylase/synthase complex subunit gamma 2 from Methanosarcina thermophila.